The following is a 346-amino-acid chain: Tetraacyldisaccharide 4'-kinase (346 aa).

53–60 (TCGGTGKT) serves as a coordination point for ATP.

It belongs to the LpxK family.

The catalysed reaction is a lipid A disaccharide + ATP = a lipid IVA + ADP + H(+). The protein operates within glycolipid biosynthesis; lipid IV(A) biosynthesis; lipid IV(A) from (3R)-3-hydroxytetradecanoyl-[acyl-carrier-protein] and UDP-N-acetyl-alpha-D-glucosamine: step 6/6. In terms of biological role, transfers the gamma-phosphate of ATP to the 4'-position of a tetraacyldisaccharide 1-phosphate intermediate (termed DS-1-P) to form tetraacyldisaccharide 1,4'-bis-phosphate (lipid IVA). This is Tetraacyldisaccharide 4'-kinase from Bartonella tribocorum (strain CIP 105476 / IBS 506).